Consider the following 354-residue polypeptide: 3'-5' exonuclease (354 aa).

The tract at residues 1–120 (MERYLTKMPI…PSPEKEKPEK (120 aa)) is disordered. Over residues 13–50 (KANEVPKKEAFAKKETPKVARKATKTDTPKELKDKENA) the composition is skewed to basic and acidic residues. Positions 59–70 (TKGRPGRPAAKR) are enriched in basic residues. Basic and acidic residues predominate over residues 71 to 91 (KNLDTPDVKDEKIAMEEENPP). Residues Ser-104, Ser-110, and Ser-112 each carry the phosphoserine modification. Residues 149–314 (WVEKQKDDVV…GQVIYRELER (166 aa)) enclose the 3'-5' exonuclease domain. The Mg(2+) site is built by Asp-163, Glu-165, and Asp-301.

This sequence belongs to the WRNexo family.

The protein localises to the nucleus. Its function is as follows. Has exonuclease activity on both single-stranded and duplex templates bearing overhangs, but not blunt ended duplex DNA, and cleaves in a 3'-5' direction. Essential for the formation of DNA replication focal centers. Has an important role in maintaining genome stability. This is 3'-5' exonuclease from Drosophila sechellia (Fruit fly).